The following is a 315-amino-acid chain: Adenine deaminase (315 aa).

Residues His-14, His-16, and His-194 each contribute to the Zn(2+) site. The active-site Proton donor is Glu-197. Asp-275 is a Zn(2+) binding site. Asp-276 is a binding site for substrate.

The protein belongs to the metallo-dependent hydrolases superfamily. Adenosine and AMP deaminases family. Adenine deaminase type 2 subfamily. Requires Zn(2+) as cofactor.

It catalyses the reaction adenine + H2O + H(+) = hypoxanthine + NH4(+). Its function is as follows. Catalyzes the hydrolytic deamination of adenine to hypoxanthine. Plays an important role in the purine salvage pathway and in nitrogen catabolism. This chain is Adenine deaminase, found in Pseudomonas putida (strain W619).